The chain runs to 177 residues: PLAC8-like protein 1 (177 aa).

The protein belongs to the cornifelin family.

The sequence is that of PLAC8-like protein 1 (PLAC8L1) from Homo sapiens (Human).